We begin with the raw amino-acid sequence, 501 residues long: ATP synthase subunit beta (501 aa).

153-160 lines the ATP pocket; sequence GGAGVGKT.

This sequence belongs to the ATPase alpha/beta chains family. In terms of assembly, F-type ATPases have 2 components, CF(1) - the catalytic core - and CF(0) - the membrane proton channel. CF(1) has five subunits: alpha(3), beta(3), gamma(1), delta(1), epsilon(1). CF(0) has three main subunits: a(1), b(2) and c(9-12). The alpha and beta chains form an alternating ring which encloses part of the gamma chain. CF(1) is attached to CF(0) by a central stalk formed by the gamma and epsilon chains, while a peripheral stalk is formed by the delta and b chains.

The protein localises to the cell inner membrane. The catalysed reaction is ATP + H2O + 4 H(+)(in) = ADP + phosphate + 5 H(+)(out). Produces ATP from ADP in the presence of a proton gradient across the membrane. The catalytic sites are hosted primarily by the beta subunits. This Cytophaga hutchinsonii (strain ATCC 33406 / DSM 1761 / CIP 103989 / NBRC 15051 / NCIMB 9469 / D465) protein is ATP synthase subunit beta.